The chain runs to 203 residues: Outer-membrane lipoprotein carrier protein (203 aa).

A signal peptide spans 1 to 21 (MKKMAIACALLSSVVASSVWA). Positions 178 to 203 (QQNGAVEPSKFTFTPPQGVTIDDQRK) are disordered.

It belongs to the LolA family. In terms of assembly, monomer.

It localises to the periplasm. Participates in the translocation of lipoproteins from the inner membrane to the outer membrane. Only forms a complex with a lipoprotein if the residue after the N-terminal Cys is not an aspartate (The Asp acts as a targeting signal to indicate that the lipoprotein should stay in the inner membrane). This is Outer-membrane lipoprotein carrier protein from Salmonella typhi.